Consider the following 187-residue polypeptide: Orotate phosphoribosyltransferase (187 aa).

110–118 (EDVVTTGGS) serves as a coordination point for 5-phospho-alpha-D-ribose 1-diphosphate. Orotate-binding residues include T114 and R142.

This sequence belongs to the purine/pyrimidine phosphoribosyltransferase family. PyrE subfamily. As to quaternary structure, homodimer. It depends on Mg(2+) as a cofactor.

The catalysed reaction is orotidine 5'-phosphate + diphosphate = orotate + 5-phospho-alpha-D-ribose 1-diphosphate. It functions in the pathway pyrimidine metabolism; UMP biosynthesis via de novo pathway; UMP from orotate: step 1/2. Catalyzes the transfer of a ribosyl phosphate group from 5-phosphoribose 1-diphosphate to orotate, leading to the formation of orotidine monophosphate (OMP). The chain is Orotate phosphoribosyltransferase from Thermotoga maritima (strain ATCC 43589 / DSM 3109 / JCM 10099 / NBRC 100826 / MSB8).